Here is a 208-residue protein sequence, read N- to C-terminus: Putative speedy protein E7 (208 aa).

The protein belongs to the Speedy/Ringo family.

The chain is Putative speedy protein E7 (SPDYE7P) from Homo sapiens (Human).